Here is a 422-residue protein sequence, read N- to C-terminus: WD repeat and SOCS box-containing protein 1 (422 aa).

5 WD repeats span residues 124–165 (SRCV…LLLN), 168–208 (DHTE…NMMK), 212–251 (GHQN…MIRK), 254–293 (GHYN…ILFE), and 309–346 (DNGR…SYPV). Positions 374–422 (NAYFWSTPKYVSSLQHLCRMAIRRVMNTNEVKKLPIPQKIMEFLTYQTM) constitute an SOCS box domain.

Component of a probable ECS E3 ubiquitin-protein ligase complex that contains the Elongin BC complex.

The protein operates within protein modification; protein ubiquitination. Its function is as follows. Probable substrate-recognition component of a SCF-like ECS (Elongin-Cullin-SOCS-box protein) E3 ubiquitin-protein ligase complex which mediates the ubiquitination and subsequent proteasomal degradation of target proteins. The polypeptide is WD repeat and SOCS box-containing protein 1 (wsb1) (Xenopus tropicalis (Western clawed frog)).